Here is a 177-residue protein sequence, read N- to C-terminus: Disulfide bond formation protein B (177 aa).

Topologically, residues 1–14 are cytoplasmic; it reads MLIFFKNLSMKRST. A helical transmembrane segment spans residues 15 to 31; sequence WILLFISALVLESTALY. At 32 to 49 the chain is on the periplasmic side; that stretch reads FQHGMGLNPCVMCIYERV. A disulfide bridge connects residues Cys-41 and Cys-44. A helical transmembrane segment spans residues 50 to 65; sequence AILGILFSGLIGCIAP. The Cytoplasmic portion of the chain corresponds to 66 to 72; that stretch reads KWLVLRI. Residues 73–90 form a helical membrane-spanning segment; the sequence is LALLIGLGSAVKGLLLAI. The Periplasmic portion of the chain corresponds to 91-145; it reads KHLDYQINVYPWNQCAMVPDFPQTLPLDKWFPNIFMPSGSCSDITWSFLGFSMVQ. Residues Cys-105 and Cys-131 are joined by a disulfide bond. The chain crosses the membrane as a helical span at residues 146–164; the sequence is WIIVIFACYFLFFIILSIS. The Cytoplasmic segment spans residues 165–177; that stretch reads QFKKVRKNRMLFR.

It belongs to the DsbB family.

The protein localises to the cell inner membrane. Functionally, required for disulfide bond formation in some periplasmic proteins. Acts by oxidizing the DsbA protein. In Histophilus somni (strain 129Pt) (Haemophilus somnus), this protein is Disulfide bond formation protein B.